Here is a 246-residue protein sequence, read N- to C-terminus: DNA polymerase sliding clamp 3 (246 aa).

It belongs to the PCNA family. In terms of assembly, the subunits circularize to form a toroid; DNA passes through its center. Replication factor C (RFC) is required to load the toroid on the DNA. Forms dimeric complexes with PCNA1 and PCNA2, and trimeric complexes with PCNA123 and PCNA323; does not form homotrimers. Crystal structures show a heterotetramer of 2 PCNA2 and 2 PCNA3, which would be large enough to clamp a Holliday junction.

Sliding clamp subunit that acts as a moving platform for DNA processing. Responsible for tethering the catalytic subunit of DNA polymerase and other proteins to DNA during high-speed replication. Both trimeric complexes inhibit DNA ligase and both 3'-5' and 5'-3' activity of Hel308 (Hjm) helicase, but stimulate Hjc, the Holliday junction cleavage enzyme. The protein is DNA polymerase sliding clamp 3 of Sulfurisphaera tokodaii (strain DSM 16993 / JCM 10545 / NBRC 100140 / 7) (Sulfolobus tokodaii).